The following is a 34-amino-acid chain: Photosystem I reaction center subunit XII (34 aa).

A helical transmembrane segment spans residues 10–32 (IFIALVVAAHAGVLAVRLCVSLY).

Belongs to the PsaM family.

The protein resides in the cellular thylakoid membrane. The chain is Photosystem I reaction center subunit XII from Synechococcus sp. (strain WH7803).